Consider the following 437-residue polypeptide: Ribosomal protein uS12 methylthiotransferase RimO (437 aa).

One can recognise an MTTase N-terminal domain in the interval 4–114 (PRISFVSLGC…VIEAVHTAIP (111 aa)). Residues cysteine 13, cysteine 49, cysteine 78, cysteine 145, cysteine 149, and cysteine 152 each contribute to the [4Fe-4S] cluster site. A Radical SAM core domain is found at 131–369 (LTPRHYAYLK…MAKQQQISTH (239 aa)). The 66-residue stretch at 372–437 (KKKIGKRLQV…DAYDLYGIAV (66 aa)) folds into the TRAM domain.

Belongs to the methylthiotransferase family. RimO subfamily. [4Fe-4S] cluster serves as cofactor.

Its subcellular location is the cytoplasm. The enzyme catalyses L-aspartate(89)-[ribosomal protein uS12]-hydrogen + (sulfur carrier)-SH + AH2 + 2 S-adenosyl-L-methionine = 3-methylsulfanyl-L-aspartate(89)-[ribosomal protein uS12]-hydrogen + (sulfur carrier)-H + 5'-deoxyadenosine + L-methionine + A + S-adenosyl-L-homocysteine + 2 H(+). Functionally, catalyzes the methylthiolation of an aspartic acid residue of ribosomal protein uS12. The chain is Ribosomal protein uS12 methylthiotransferase RimO from Bartonella tribocorum (strain CIP 105476 / IBS 506).